Reading from the N-terminus, the 537-residue chain is Beta-1-syntrophin (537 aa).

Ala-2 bears the N-acetylalanine mark. 2 consecutive PH domains span residues 18–297 (RAQR…SNAG) and 321–432 (EIRH…QGCH). 3 positions are modified to phosphoserine: Ser-86, Ser-125, and Ser-204. In terms of domain architecture, PDZ spans 111-194 (GVKVLKQELG…EVLLEVKYMR (84 aa)). Residues 204–233 (SPVSEIGWETPPPESPRLGGGSAEPLSSQS) are disordered. Thr-213 carries the post-translational modification Phosphothreonine. Residues Ser-218, Ser-225, Ser-231, Ser-235, and Ser-388 each carry the phosphoserine modification. Residues 481–537 (PYEKLKMSSDDGIRMLYLDFGGKEGEIQLDLHSCPKPIVFIIHSFLSAKITRLGLVA) form the SU domain. Residues 517 to 537 (PIVFIIHSFLSAKITRLGLVA) form a calmodulin-binding region.

This sequence belongs to the syntrophin family. In terms of assembly, monomer and homodimer. Interacts with the viral HTLV-1 TAX protein and other members of the syntrophin family: SNTA1 and SNTB2. Interacts with the dystrophin protein DMD and related proteins DTNA and UTRN and with the sodium channel proteins SCN4A and SCN5A. Interacts with DTNB. Phosphorylated by CaM-kinase II. Ubiquitous. Expressed at high levels in the liver.

Its subcellular location is the cell membrane. It is found in the sarcolemma. The protein resides in the cell junction. The protein localises to the cytoplasm. It localises to the cytoskeleton. In terms of biological role, adapter protein that binds to and probably organizes the subcellular localization of a variety of membrane proteins. May link various receptors to the actin cytoskeleton and the dystrophin glycoprotein complex. The chain is Beta-1-syntrophin (Sntb1) from Mus musculus (Mouse).